We begin with the raw amino-acid sequence, 543 residues long: T-complex protein 1 subunit gamma (543 aa).

This sequence belongs to the TCP-1 chaperonin family.

The protein localises to the cytoplasm. Its function is as follows. Molecular chaperone; assists the folding of proteins upon ATP hydrolysis. Known to play a role, in vitro, in the folding of actin and tubulin. Plays a role in microtubule polymerization. This Caenorhabditis elegans protein is T-complex protein 1 subunit gamma.